Here is a 262-residue protein sequence, read N- to C-terminus: Acyl-coenzyme A diphosphatase FITM2 (262 aa).

The Cytoplasmic portion of the chain corresponds to 1 to 23 (MEHLERCAWVLRGTLVRSAVRKY). A helical transmembrane segment spans residues 24 to 44 (LPWALAASMLAGSLLKELSPL). Residues 45–57 (PESYLSNKRNVLN) are Lumenal-facing. The helical transmembrane segment at 58–78 (VYFVKVAWAWTFCLLLPFIAL) threads the bilayer. At 79–93 (TNYHLTGKAGLVLRR) the chain is on the cytoplasmic side. The chain crosses the membrane as a helical span at residues 94–114 (LSTLLVGTAIWYVCTAIFSNI). The Lumenal segment spans residues 115-145 (EHYTGSCYQSPALEGERKEHQSKQQCHGEGG). Residues 146-166 (FWHGFDISGHSFLLTFCALMI) form a helical membrane-spanning segment. His155 is a catalytic residue. The Cytoplasmic portion of the chain corresponds to 167 to 190 (VEEMAVLHEVKTDRNHCLHAAITT). A helical membrane pass occupies residues 191 to 211 (LVVALGFLTFIWVWMFLCTAV). The Lumenal portion of the chain corresponds to 212–218 (YFHNLSQ). The active site involves His214. Residues 219–239 (KVFGTLFGLLGWYGTYGCWYL) form a helical membrane-spanning segment. The Cytoplasmic segment spans residues 240–262 (KSFSPGLPPQSSSLNLKQDTYKK).

This sequence belongs to the FIT family. FIT2 subfamily.

The protein localises to the endoplasmic reticulum membrane. It carries out the reaction an acyl-CoA + H2O = an acyl-4'-phosphopantetheine + adenosine 3',5'-bisphosphate + 2 H(+). The enzyme catalyses (9Z)-octadecenoyl-CoA + H2O = S-(9Z-octadecenoyl)-4'-phosphopantetheine + adenosine 3',5'-bisphosphate + 2 H(+). It catalyses the reaction (5Z,8Z,11Z,14Z)-eicosatetraenoyl-CoA + H2O = S-(5Z,8Z,11Z,14Z-eicosatetraenoyl)-4'-phosphopantetheine + adenosine 3',5'-bisphosphate + 2 H(+). The catalysed reaction is hexadecanoyl-CoA + H2O = S-hexadecanoyl-4'-phosphopantetheine + adenosine 3',5'-bisphosphate + 2 H(+). Functionally, fatty acyl-coenzyme A (CoA) diphosphatase that hydrolyzes fatty acyl-CoA to yield acyl-4'-phosphopantetheine and adenosine 3',5'-bisphosphate. Preferentially hydrolyzes unsaturated long-chain acyl-CoA substrates such as oleoyl-CoA/(9Z)-octadecenoyl-CoA and arachidonoyl-CoA/(5Z,8Z,11Z,14Z)-eicosatetraenoyl-CoA in the endoplasmic reticulum (ER) lumen. This catalytic activity is required for maintaining ER structure and for lipid droplets (LDs) biogenesis, which are lipid storage organelles involved in maintaining lipid and energy homeostasis. Directly binds to diacylglycerol (DAGs) and triacylglycerol, which is also important for LD biogenesis. May support directional budding of nacent LDs from the ER into the cytosol by reducing DAG levels at sites of LD formation. Plays a role in the regulation of cell morphology and cytoskeletal organization. In Bos taurus (Bovine), this protein is Acyl-coenzyme A diphosphatase FITM2.